Consider the following 552-residue polypeptide: Dihydroxy-acid dehydratase (552 aa).

A [2Fe-2S] cluster-binding site is contributed by Cys-46. Asp-78 serves as a coordination point for Mg(2+). Cys-119 provides a ligand contact to [2Fe-2S] cluster. Mg(2+) contacts are provided by Asp-120 and Lys-121. An N6-carboxylysine modification is found at Lys-121. Cys-191 serves as a coordination point for [2Fe-2S] cluster. Position 442 (Glu-442) interacts with Mg(2+). Ser-468 acts as the Proton acceptor in catalysis.

It belongs to the IlvD/Edd family. As to quaternary structure, homodimer. It depends on [2Fe-2S] cluster as a cofactor. Mg(2+) is required as a cofactor.

The catalysed reaction is (2R)-2,3-dihydroxy-3-methylbutanoate = 3-methyl-2-oxobutanoate + H2O. The enzyme catalyses (2R,3R)-2,3-dihydroxy-3-methylpentanoate = (S)-3-methyl-2-oxopentanoate + H2O. It functions in the pathway amino-acid biosynthesis; L-isoleucine biosynthesis; L-isoleucine from 2-oxobutanoate: step 3/4. It participates in amino-acid biosynthesis; L-valine biosynthesis; L-valine from pyruvate: step 3/4. Its function is as follows. Functions in the biosynthesis of branched-chain amino acids. Catalyzes the dehydration of (2R,3R)-2,3-dihydroxy-3-methylpentanoate (2,3-dihydroxy-3-methylvalerate) into 2-oxo-3-methylpentanoate (2-oxo-3-methylvalerate) and of (2R)-2,3-dihydroxy-3-methylbutanoate (2,3-dihydroxyisovalerate) into 2-oxo-3-methylbutanoate (2-oxoisovalerate), the penultimate precursor to L-isoleucine and L-valine, respectively. The chain is Dihydroxy-acid dehydratase from Picrophilus torridus (strain ATCC 700027 / DSM 9790 / JCM 10055 / NBRC 100828 / KAW 2/3).